Reading from the N-terminus, the 441-residue chain is Arginine biosynthesis bifunctional protein ArgJ, mitochondrial (441 aa).

Substrate is bound by residues Thr177, Lys203, Thr214, Glu303, Asn436, and Ser441. Thr214 functions as the Nucleophile in the catalytic mechanism.

Belongs to the ArgJ family. In terms of assembly, heterodimer of an alpha and a beta chain. The alpha and beta chains are autoproteolytically processed from a single precursor protein within the mitochondrion.

Its subcellular location is the mitochondrion matrix. The catalysed reaction is N(2)-acetyl-L-ornithine + L-glutamate = N-acetyl-L-glutamate + L-ornithine. It carries out the reaction L-glutamate + acetyl-CoA = N-acetyl-L-glutamate + CoA + H(+). It functions in the pathway amino-acid biosynthesis; L-arginine biosynthesis; L-ornithine and N-acetyl-L-glutamate from L-glutamate and N(2)-acetyl-L-ornithine (cyclic): step 1/1. It participates in amino-acid biosynthesis; L-arginine biosynthesis; N(2)-acetyl-L-ornithine from L-glutamate: step 1/4. Its function is as follows. Catalyzes two activities which are involved in the cyclic version of arginine biosynthesis: the synthesis of acetylglutamate from glutamate and acetyl-CoA, and of ornithine by transacetylation between acetylornithine and glutamate. The sequence is that of Arginine biosynthesis bifunctional protein ArgJ, mitochondrial from Debaryomyces hansenii (strain ATCC 36239 / CBS 767 / BCRC 21394 / JCM 1990 / NBRC 0083 / IGC 2968) (Yeast).